The sequence spans 177 residues: Cell division protein ZapC (177 aa).

It belongs to the ZapC family. In terms of assembly, interacts directly with FtsZ.

Its subcellular location is the cytoplasm. Functionally, contributes to the efficiency of the cell division process by stabilizing the polymeric form of the cell division protein FtsZ. Acts by promoting interactions between FtsZ protofilaments and suppressing the GTPase activity of FtsZ. This is Cell division protein ZapC from Shewanella frigidimarina (strain NCIMB 400).